Here is a 731-residue protein sequence, read N- to C-terminus: Autophagy-related protein 20 (731 aa).

The segment covering 1–22 (MSSVLRNQDNPPTISEVSSTTK) has biased composition (polar residues). The interval 1–130 (MSSVLRNQDN…NNKSNNVSRV (130 aa)) is disordered. Basic and acidic residues predominate over residues 31 to 41 (KQEEKEKEKEI). A compositionally biased stretch (polar residues) spans 69-82 (SFMTANSFNEGPNT). 2 stretches are compositionally biased toward low complexity: residues 92 to 102 (NNNSSSNNNRG) and 113 to 128 (LLLY…NNVS). Residues 164–340 (IQITEAGNSN…KFLDPNANWG (177 aa)) form the PX domain. A 1,2-diacyl-sn-glycero-3-phospho-(1D-myo-inositol-3-phosphate)-binding residues include Arg205, Ser207, and Lys231. The segment at 253 to 277 (SVAGSNGNSGGSGGGGASGGAGSGS) is disordered. Residues 259 to 277 (GNSGGSGGGGASGGAGSGS) are compositionally biased toward gly residues. Residue Arg306 coordinates a 1,2-diacyl-sn-glycero-3-phospho-(1D-myo-inositol-3-phosphate). Residues 586 to 626 (NSQVKPKNGKYNLEQQQSSTVSPAPPPGPPPSSSSSSSSSS) form a disordered region. Residues 608 to 617 (PAPPPGPPPS) show a composition bias toward pro residues.

Belongs to the sorting nexin family.

The protein localises to the endosome membrane. Its subcellular location is the preautophagosomal structure membrane. Functionally, required for cytoplasm to vacuole transport (Cvt), pexophagy and mitophagy. Also involved in endoplasmic reticulum-specific autophagic process and is essential for the survival of cells subjected to severe ER stress. Functions in protein retrieval from the endocytic pathway. The sequence is that of Autophagy-related protein 20 (ATG20) from Candida albicans (strain SC5314 / ATCC MYA-2876) (Yeast).